The chain runs to 316 residues: Polyprenyl transferase dpchC (316 aa).

Helical transmembrane passes span 24–44, 60–80, 105–125, 154–174, 192–212, 234–254, 258–278, and 296–316; these read PLFTTFAGLWSTLLAGGAKMA, ALCFVASYLFCGAGMVWNDWI, EAMVWMVLQAALSWGVLEVML, MLGIYPQYILAFTIAWPAVIG, CLPLCTMVFFWTIYLNTAYSY, IHLLLVALVSPILVCLPIYLF, SLWLWLSWMGVWTASLAQQLV, and FILGIWTILACVVQVFLTGSA.

This sequence belongs to the UbiA prenyltransferase family. It depends on Mg(2+) as a cofactor.

The protein resides in the membrane. It participates in secondary metabolite biosynthesis; terpenoid biosynthesis. Its function is as follows. Polyprenyl transferase; part of the gene cluster that mediates the biosynthesis of the diterpenoid pyrones higginsianins A and B. The first step of the pathway is the synthesis of the alpha-pyrone moiety by the polyketide synthase dpchA via condensation of one acetyl-CoA starter unit with 3 malonyl-CoA units and 2 methylations. The alpha-pyrone is then combined with geranylgeranyl pyrophosphate (GGPP) formed by the GGPP synthase dpchD through the action of the prenyltransferase dpchC to yield a linear alpha-pyrone diterpenoid. Subsequent steps in the diterpenoid pyrone biosynthetic pathway involve the decalin core formation, which is initiated by the epoxidation of the C10-C11 olefin by the FAD-dependent oxidoreductase dpchE, and is followed by a cyclization cascade catalyzed by the terpene cyclase dpchB. The short chain dehydrogenase/reductase dpchG then oxidizes the 8S hydroxy group to a ketone and the short chain dehydrogenase/reductase dpchH reduces the ketone to the 8R hydroxy group to yield higginsianin B. Finally, the FAD-dependent oxidoreductase dpchF converts higginsianin B into higginsianin A. The protein is Polyprenyl transferase dpchC of Colletotrichum higginsianum (strain IMI 349063) (Crucifer anthracnose fungus).